Reading from the N-terminus, the 282-residue chain is Elongation factor Ts (282 aa).

The tract at residues 79–82 (TDFV) is involved in Mg(2+) ion dislocation from EF-Tu.

It belongs to the EF-Ts family.

The protein resides in the cytoplasm. Associates with the EF-Tu.GDP complex and induces the exchange of GDP to GTP. It remains bound to the aminoacyl-tRNA.EF-Tu.GTP complex up to the GTP hydrolysis stage on the ribosome. The polypeptide is Elongation factor Ts (Shewanella sediminis (strain HAW-EB3)).